Here is a 606-residue protein sequence, read N- to C-terminus: Chaperone protein DnaK (606 aa).

Phosphothreonine; by autocatalysis is present on threonine 174. The interval 576 to 606 is disordered; it reads QAAGSANPGGSQGTSQGNVYEADYKVEDDNK. Basic and acidic residues predominate over residues 597–606; sequence ADYKVEDDNK.

The protein belongs to the heat shock protein 70 family.

In terms of biological role, acts as a chaperone. The sequence is that of Chaperone protein DnaK from Caldanaerobacter subterraneus subsp. tengcongensis (strain DSM 15242 / JCM 11007 / NBRC 100824 / MB4) (Thermoanaerobacter tengcongensis).